The chain runs to 3010 residues: Genome polyprotein (3010 aa).

N-acetylserine; by host is present on Ser2. The segment at 2–23 (STNPKPQRKTKRNTNRRPQDVK) is interaction with STAT1. The tract at residues 2 to 58 (STNPKPQRKTKRNTNRRPQDVKFPGGGQIVGGVYLLPRRGPRLGVRAPRKTSERSQP) is interaction with EIF2AK2/PKR. Residues 2–59 (STNPKPQRKTKRNTNRRPQDVKFPGGGQIVGGVYLLPRRGPRLGVRAPRKTSERSQPR) are interaction with DDX3X. The tract at residues 2–75 (STNPKPQRKT…PKARRPEGRT (74 aa)) is disordered. 2 consecutive short sequence motifs (nuclear localization signal) follow at residues 5–13 (PKPQRKTKR) and 38–43 (PRRGPR). A compositionally biased stretch (basic residues) spans 7 to 16 (PQRKTKRNTN). Residues 32-47 (GGVYLLPRRGPRLGVR) show a composition bias toward low complexity. Phosphoserine; by host is present on Ser53. 2 consecutive short sequence motifs (nuclear localization signal) follow at residues 58–64 (PRGRRQP) and 66–71 (PKARRP). The segment covering 58–68 (PRGRRQPIPKA) has biased composition (basic residues). At Ser99 the chain carries Phosphoserine; by host. The tract at residues 112 to 152 (PRRRSRNLGKVIDTLTCGFADLMGYIPLVGAPLGGAARALA) is important for endoplasmic reticulum and mitochondrial localization. Ser116 is subject to Phosphoserine; by host PKA. The interaction with APOA2 stretch occupies residues 122 to 173 (VIDTLTCGFADLMGYIPLVGAPLGGAARALAHGVRVLEDGVNYATGNLPGCS). An important for lipid droplets localization region spans residues 164–167 (YATG). The propeptide at 178–191 (LLALLSCLTTPASA) is ER anchor for the core protein, removed in mature form by host signal peptidase. Over 190-358 (SAYEVHNVSG…AGAHWGVLAG (169 aa)) the chain is Lumenal. N-linked (GlcNAc...) asparagine; by host glycosylation is found at Asn196, Asn209, Asn234, and Asn250. Residues 265–296 (LVGAAAFCSAMYVGDLCGSVFLVSQLFTFSPR) are important for fusion. Residue Asn305 is glycosylated (N-linked (GlcNAc...) asparagine; by host). A helical transmembrane segment spans residues 359-379 (LAYYSMAGNWAKVLIVMLLFA). Topologically, residues 380-725 (GVDGDTHVTG…WEYVLLLFLL (346 aa)) are lumenal. The tract at residues 385-411 (THVTGGAQAKTTNRLVSMFASGPSQKI) is HVR1. Residue Asn417 is glycosylated (N-linked (GlcNAc...) asparagine; by host). N-linked (GlcNAc...) (high mannose) asparagine; by host glycans are attached at residues Asn423, Asn430, and Asn448. 4 cysteine pairs are disulfide-bonded: Cys429–Cys552, Cys452–Cys459, Cys486–Cys494, and Cys503–Cys508. Residues 474 to 482 (YAESSRSDQ) are HVR2. Residues 480–494 (SDQRPYCWHYPPPQC) form a CD81-binding 1 region. N-linked (GlcNAc...) (high mannose) asparagine; by host glycosylation is found at Asn532 and Asn540. The CD81-binding 2 stretch occupies residues 544-552 (PPQGNWFGC). N-linked (GlcNAc...) (high mannose) asparagine; by host glycosylation is present at Asn556. Cys564 and Cys569 are disulfide-bonded. A glycan (N-linked (GlcNAc...) (high mannose) asparagine; by host) is linked at Asn576. Cystine bridges form between Cys581/Cys585, Cys597/Cys620, and Cys607/Cys644. 2 N-linked (GlcNAc...) (high mannose) asparagine; by host glycosylation sites follow: Asn623 and Asn645. Residues Cys652 and Cys677 are joined by a disulfide bond. The tract at residues 660–671 (PELSPLLLSTTE) is EIF2AK2/eIF2-alpha phosphorylation homology domain (PePHD). A helical transmembrane segment spans residues 726-746 (LADARVCACLWMMLLIAQAEA). Residues 747–757 (ALENLVVLNSA) lie on the Lumenal side of the membrane. A helical transmembrane segment spans residues 758 to 778 (SVAGAHGILSFLVFFCAAWYI). Over 779 to 781 (KGR) the chain is Cytoplasmic. A helical membrane pass occupies residues 782–803 (LVPGATYALYGVWPLLLLLLAL). Over 804-813 (PPRAYAMDRE) the chain is Lumenal. A helical transmembrane segment spans residues 814–834 (MAASCGGAVFVGLVLLTLSPY). Residues 835–838 (YKVF) are Cytoplasmic-facing. Residues 839-859 (LARLIWWLQYFTTRAEADLHV) traverse the membrane as a helical segment. The Lumenal portion of the chain corresponds to 860-881 (WIPPLNARGGRDAIILLMCAVH). A helical membrane pass occupies residues 882 to 902 (PELIFDITKLLIAILGPLMVL). In terms of domain architecture, Peptidase C18 spans 903 to 1026 (QAGITRVPYF…SLEGRGLRLL (124 aa)). Residues 903 to 1657 (QAGITRVPYF…CMSADLEVVT (755 aa)) are Cytoplasmic-facing. Positions 904–1206 (AGITRVPYFV…PVESMETTMR (303 aa)) are protease NS2-3. Cys922 carries the S-palmitoyl cysteine; by host lipid modification. An interaction with host SCPS1 region spans residues 929–949 (AGGHYVQMAFMKLGALTGTYI). Residues His952, Glu972, and Cys993 each act as for protease NS2 activity; shared with dimeric partner in the active site. One can recognise a Peptidase S29 domain in the interval 1027-1208 (APITAYSQQT…ESMETTMRSP (182 aa)). Active-site charge relay system; for serine protease NS3 activity residues include His1083 and Asp1107. Zn(2+)-binding residues include Cys1123 and Cys1125. Ser1165 acts as the Charge relay system; for serine protease NS3 activity in catalysis. Zn(2+)-binding residues include Cys1171 and His1175. The Helicase ATP-binding domain occupies 1217–1369 (PAVPQSFQVA…PNIEEVALSN (153 aa)). 1230–1237 (APTGSGKS) is an ATP binding site. Residues Ser1237 and Glu1317 each contribute to the Mg(2+) site. The short motif at 1316–1319 (DECH) is the DECH box element. Residues 1486-1497 (QRRGRTGRGRRG) form an RNA-binding region. Residues 1658-1678 (STWVLVGGVLAALAAYCLTTG) form a helical membrane-spanning segment. The NS3-binding stretch occupies residues 1679 to 1690 (SVVIVGRIILSG). The Cytoplasmic segment spans residues 1679–1805 (SVVIVGRIIL…SITSPLTTQS (127 aa)). Residues 1806–1826 (TLLFNILGGWVAAQLAPPSAA) traverse the membrane as a helical segment. At 1827 to 1828 (SA) the chain is on the lumenal side. The helical transmembrane segment at 1829–1849 (FVGAGIAGAAVGSIGLGKVLV) threads the bilayer. The tract at residues 1833 to 1861 (GIAGAAVGSIGLGKVLVDILAGYGAGVAG) is glycine zipper. A topological domain (cytoplasmic) is located at residue Asp1850. Residues 1851–1871 (ILAGYGAGVAGALVAFKVMSG) form a helical membrane-spanning segment. Residues 1872-1881 (EMPSTEDLVN) are Lumenal-facing. The helical transmembrane segment at 1882-1902 (LLPAILSPGALVVGVVCAAIL) threads the bilayer. At 1903–1972 (RRHVGPGEGA…WINEDCSTPC (70 aa)) the chain is on the cytoplasmic side. S-palmitoyl cysteine; by host attachment occurs at residues Cys1968 and Cys1972. Residues 1973-2003 (SGSWLRDVWDWICTVLTDFKTWLQSKLLPQL) lie within the membrane without spanning it. Residues 1978–1998 (RDVWDWICTVLTDFKTWLQSK) are membrane-binding. Residues 2004–2989 (PGVPFFSCQR…YHSLSRARPR (986 aa)) lie on the Cytoplasmic side of the membrane. The tract at residues 2005-2221 (GVPFFSCQRG…KATCTTHHVS (217 aa)) is RNA-binding. Residues Cys2011, Cys2029, Cys2031, and Cys2052 each coordinate Zn(2+). The FKBP8-binding stretch occupies residues 2120–2208 (EFFSEVDGVR…ASSSASQLSA (89 aa)). Residues 2120 to 2332 (EFFSEVDGVR…PIPPPRRKRT (213 aa)) are transcriptional activation. The segment at 2135 to 2139 (PACRP) is interaction with non-structural protein 4A. The interval 2189–2441 (RLARGSPPSL…PCAAEESKLP (253 aa)) is interaction with host SKP2. Ser2194 carries the phosphoserine; by host; in p56 modification. Residues Ser2197, Ser2201, Ser2204, Ser2207, and Ser2210 each carry the phosphoserine; by host; in p58 modification. The ISDR stretch occupies residues 2210-2249 (SLKATCTTHHVSPDADLIEANLLWRQEMGGNITRVESENK). Residues 2210 to 2275 (SLKATCTTHH…REVSVPAEIL (66 aa)) form an EIF2AK2/PKR-binding region. The interval 2249 to 2306 (KVVVLDSFDPLRAEEDEREVSVPAEILRKSKKFPAAMPIWARPDYNPPLLESWKDPDY) is NS4B-binding. The SH3-binding signature appears at 2322 to 2325 (PPIP). Positions 2326-2334 (PPRRKRTVV) match the Nuclear localization signal motif. The interaction with host IFI27 stretch occupies residues 2332 to 2441 (TVVLTESSVS…PCAAEESKLP (110 aa)). A Glycyl lysine isopeptide (Lys-Gly) (interchain with G-Cter in ubiquitin) cross-link involves residue Lys2350. A compositionally biased stretch (polar residues) spans 2351-2365 (TFGSSESSAVDSGTA). The interval 2351–2407 (TFGSSESSAVDSGTATALPDQASDDGDKGSDVESYSSMPPLEGEPGDPDLSDGSWST) is disordered. Residues 2354-2377 (SSESSAVDSGTATALPDQASDDGD) form a V3 region. Phosphoserine; by host occurs at positions 2448 and 2461. The RdRp catalytic domain maps to 2633–2751 (PMGFSYDTRC…ICESAGTQED (119 aa)). The Mg(2+) site is built by Asp2639, Asp2737, and Asp2738. The helical transmembrane segment at 2990–3010 (WFMLCLLLLSVGVGIYLLPNR) threads the bilayer.

It belongs to the hepacivirus polyprotein family. Homooligomer. Interacts with E1 (via C-terminus). Interacts with the non-structural protein 5A. Interacts (via N-terminus) with host STAT1 (via SH2 domain); this interaction results in decreased STAT1 phosphorylation and ubiquitin-mediated proteasome-dependent STAT1 degradation, leading to decreased IFN-stimulated gene transcription. Interacts with host STAT3; this interaction constitutively activates STAT3. Associates with host LTBR receptor. Interacts with host TNFRSF1A receptor and possibly induces apoptosis. Interacts with host HNRPK. Interacts with host YWHAE. Interacts with host UBE3A/E6AP. Interacts with host DDX3X. Interacts with host APOA2. Interacts with host RXRA protein. Interacts with host SP110 isoform 3/Sp110b; this interaction sequesters the transcriptional corepressor SP110 away from the nucleus. Interacts with host CREB3 nuclear transcription protein; this interaction triggers cell transformation. Interacts with host ACY3. Interacts with host C1QR1. Interacts with host RBM24; this interaction, which enhances the interaction of the mature core protein with 5'-UTR, may inhibit viral translation and favor replication. Interacts (via N-terminus) with host EIF2AK2/PKR (via N-terminus); this interaction induces the autophosphorylation of EIF2AK2. Part of the viral assembly initiation complex composed of NS2, E1, E2, NS3, NS4A, NS5A and the mature core protein. In terms of assembly, forms a heterodimer with envelope glycoprotein E2. Interacts with mature core protein. Interacts with protease NS2. The heterodimer E1/E2 interacts with host CLDN1; this interaction plays a role in viral entry into host cell. Interacts with host SPSB2 (via C-terminus). Part of the viral assembly initiation complex composed of NS2, E1, E2, NS3, NS4A, NS5A and the mature core protein. Interacts with host NEURL3; this interaction prevents E1 binding to glycoprotein E2. As to quaternary structure, forms a heterodimer with envelope glycoprotein E1. Interacts with host CD81 and SCARB1 receptors; these interactions play a role in viral entry into host cell. Interacts with host EIF2AK2/PKR; this interaction inhibits EIF2AK2 and probably allows the virus to evade the innate immune response. Interacts with host CD209/DC-SIGN and CLEC4M/DC-SIGNR. Interact with host SPCS1; this interaction is essential for viral particle assembly. Interacts with protease NS2. The heterodimer E1/E2 interacts with host CLDN1; this interaction plays a role in viral entry into host cell. Part of the viral assembly initiation complex composed of NS2, E1, E2, NS3, NS4A, NS5A and the mature core protein. Interacts with host SLC3A2/4F2hc; the interaction may facilitate viral entry into host cell. Interacts with human PLSCR1. Homohexamer. Homoheptamer. Interacts with protease NS2. In terms of assembly, homodimer. Interacts with host SPCS1; this interaction is essential for viral particle assembly. Interacts with envelope glycoprotein E1. Interacts with envelope glycoprotein E2. Interacts with viroporin p7. Interacts with serine protease/helicase NS3. Part of the replication complex composed of NS2, NS3, NS4A, NS4B, NS5A and the RNA-directed RNA polymerase embedded in an ER-derived membranous web. Part of the viral assembly initiation complex composed of NS2, E1, E2, NS3, NS4A, NS5A and the mature core protein. As to quaternary structure, interacts with protease NS2. Interacts with non-structural protein 4A; this interaction stabilizes the folding of NS3 serine protease. NS3-NS4A interaction is essential for NS3 activation and allows membrane anchorage of the latter. NS3/NS4A complex also prevents phosphorylation of host IRF3, thus preventing the establishment of dsRNA induced antiviral state. Interacts with host MAVS; this interaction leads to the cleavage and inhibition of host MAVS. Interacts with host TICAM1; this interaction leads to the cleavage and inhibition of host TICAM1. Interacts with host TANK-binding kinase/TBK1; this interaction results in the inhibition of the association between TBK1 and IRF3, which leads to the inhibition of IRF3 activation. Interacts with host RBM24. Part of the replication complex composed of NS2, NS3, NS4A, NS4B, NS5A and the RNA-directed RNA polymerase embedded in an ER-derived membranous web. Part of the viral assembly initiation complex composed of NS2, E1, E2, NS3, NS4A, NS5A and the mature core protein. Interacts with NS3 serine protease; this interaction stabilizes the folding of NS3 serine protease. NS3-NS4A interaction is essential for NS3 activation and allows membrane anchorage of the latter. Interacts with non-structural protein 5A (via N-terminus). Part of the replication complex composed of NS2, NS3, NS4A, NS4B, NS5A and the RNA-directed RNA polymerase embedded in an ER-derived membranous web. Part of the viral assembly initiation complex composed of NS2, E1, E2, NS3, NS4A, NS5A and the mature core protein. In terms of assembly, monomer. Homodimer; dimerization is required for RNA-binding. Interacts with the mature core protein. Interacts (via N-terminus) with non-structural protein 4A. Interacts with non-structural protein 4B. Interacts with RNA-directed RNA polymerase. Part of the viral assembly initiation complex composed of NS2, E1, E2, NS3, NS4A, NS5A and the mature core protein. Part of the replication complex composed of NS2, NS3, NS4A, NS4B, NS5A and the RNA-directed RNA polymerase embedded in an ER-derived membranous web. Interacts with host GRB2. Interacts with host BIN1. Interacts with host PIK3R1. Interacts with host SRCAP. Interacts with host FKBP8. Interacts with host VAPB. Interacts with host EIF2AK2/PKR; this interaction leads to disruption of EIF2AK2 dimerization by NS5A and probably allows the virus to evade the innate immune response. Interacts (via N-terminus) with host PACSIN2 (via N-terminus); this interaction attenuates protein kinase C alpha-mediated phosphorylation of PACSIN2 by disrupting the interaction between PACSIN2 and PRKCA. Interacts (via N-terminus) with host SRC kinase (via SH2 domain). Interacts with most Src-family kinases. Interacts with host IFI27 and SKP2; promotes the ubiquitin-mediated proteasomal degradation of NS5A. Interacts with host GPS2. Interacts with host TNFRSF21; this interaction allows the modulation by the virus of JNK, p38 MAPK, STAT3, and Akt signaling pathways in a DR6-dependent manner. Interacts (via N-terminus) with host CIDEB (via N-terminus); this interaction seems to regulate the association of HCV particles with APOE. Interacts with host CHKA/Choline Kinase-alpha; CHKA bridges host PI4KA and NS5A and potentiates NS5A-stimulated PI4KA activity, which then facilitates the targeting of the ternary complex to the ER for viral replication. Interacts with host SPSB2 (via C-terminus); this interaction targets NS5A for ubiquitination and degradation. Interacts with host RAB18; this interaction may promote the association of NS5A and other replicase components with lipid droplets. Interacts (via region D2) with host PPIA/CYPA; the interaction stimulates RNA-binding ability of NS5A and is dependent on the peptidyl-prolyl cis-trans isomerase activity of PPIA/CYPA. Interacts with host TRIM14; this interaction induces the degradation of NS5A. As to quaternary structure, homooligomer. Interacts with non-structural protein 5A. Interacts with host VAPB. Interacts with host PRK2/PKN2. Interacts with host HNRNPA1 and SEPT6; these interactions facilitate the viral replication. Part of the replication complex composed of NS2, NS3, NS4A, NS4B, NS5A and the RNA-directed RNA polymerase embedded in an ER-derived membranous web. Zn(2+) serves as cofactor. Requires Mg(2+) as cofactor. Specific enzymatic cleavages in vivo yield mature proteins. The structural proteins, core, E1, E2 and p7 are produced by proteolytic processing by host signal peptidases. The core protein precursor is synthesized as a 23 kDa, which is retained in the ER membrane through the hydrophobic signal peptide. Cleavage by the signal peptidase releases the 21 kDa mature core protein. The cleavage of the core protein precursor occurs between aminoacids 176 and 188 but the exact cleavage site is not known. Some degraded forms of the core protein appear as well during the course of infection. The other proteins (p7, NS2, NS3, NS4A, NS4B, NS5A and NS5B) are cleaved by the viral proteases. Autoprocessing between NS2 and NS3 is mediated by the NS2 cysteine protease catalytic domain and regulated by the NS3 N-terminal domain. In terms of processing, phosphorylated by host PKC and PKA. Post-translationally, ubiquitinated; mediated by UBE3A and leading to core protein subsequent proteasomal degradation. Highly N-glycosylated. In terms of processing, palmitoylation is required for NS2/3 autoprocessing and E2 recruitment to membranes. Post-translationally, palmitoylated. This modification may play a role in its polymerization or in protein-protein interactions. Phosphorylated on serines in a basal form termed p56. p58 is a hyperphosphorylated form of p56. p56 and p58 coexist in the cell in roughly equivalent amounts. Hyperphosphorylation is dependent on the presence of NS4A. Host CSNK1A1/CKI-alpha or RPS6KB1 kinases may be responsible for NS5A phosphorylation. In terms of processing, tyrosine phosphorylation is essential for the interaction with host SRC. Post-translationally, the N-terminus is phosphorylated by host PRK2/PKN2.

The protein localises to the host endoplasmic reticulum membrane. Its subcellular location is the host mitochondrion membrane. The protein resides in the virion. It localises to the host cytoplasm. It is found in the host nucleus. The protein localises to the host lipid droplet. Its subcellular location is the virion membrane. The protein resides in the host mitochondrion. It localises to the host cell membrane. It is found in the host perinuclear region. The catalysed reaction is Hydrolysis of four peptide bonds in the viral precursor polyprotein, commonly with Asp or Glu in the P6 position, Cys or Thr in P1 and Ser or Ala in P1'.. It carries out the reaction a ribonucleoside 5'-triphosphate + H2O = a ribonucleoside 5'-diphosphate + phosphate + H(+). It catalyses the reaction ATP + H2O = ADP + phosphate + H(+). The enzyme catalyses RNA(n) + a ribonucleoside 5'-triphosphate = RNA(n+1) + diphosphate. Its activity is regulated as follows. Inhibited by the antiviral drug hexamethylene amiloride. Inhibition by amantadine appears to be genotype-dependent. Also inhibited by long-alkyl-chain iminosugar derivatives. With respect to regulation, activity is up-regulated by PRK2/PKN2-mediated phosphorylation. Activity of auto-protease NS2 is dependent on zinc ions and completely inhibited by EDTA, 1,10-phenanthroline, iodocetamide and N-ethylmaleimide. According to PubMed:9261354, completely inhibited by the serine protease inhibitors TLCK and TPCK. According to PubMed:8189501, almost completely inhibited by TPCK and slightly inhibited by TLCK. Not inhibited by antipain, aprotinin, E64, PMSF and pepstatin. Also inhibited by NS2 and NS4A derived peptides. Serine protease/helicase NS3 is also activated by zinc ions. Its function is as follows. Packages viral RNA to form a viral nucleocapsid, and promotes virion budding. Participates in the viral particle production as a result of its interaction with the non-structural protein 5A. Binds RNA and may function as a RNA chaperone to induce the RNA structural rearrangements taking place during virus replication. Modulates viral translation initiation by interacting with viral IRES and 40S ribosomal subunit. Affects various cell signaling pathways, host immunity and lipid metabolism. Prevents the establishment of cellular antiviral state by blocking the interferon-alpha/beta (IFN-alpha/beta) and IFN-gamma signaling pathways and by blocking the formation of phosphorylated STAT1 and promoting ubiquitin-mediated proteasome-dependent degradation of STAT1. Activates STAT3 leading to cellular transformation. Regulates the activity of cellular genes, including c-myc and c-fos. May repress the promoter of p53, and sequester CREB3 and SP110 isoform 3/Sp110b in the cytoplasm. Represses cell cycle negative regulating factor CDKN1A, thereby interrupting an important check point of normal cell cycle regulation. Targets transcription factors involved in the regulation of inflammatory responses and in the immune response: suppresses NF-kappa-B activation, and activates AP-1. Binds to dendritic cells (DCs) via C1QR1, resulting in down-regulation of T-lymphocytes proliferation. Alters lipid metabolism by interacting with hepatocellular proteins involved in lipid accumulation and storage. Induces up-regulation of FAS promoter activity, and thereby contributes to the increased triglyceride accumulation in hepatocytes (steatosis). In terms of biological role, forms a heterodimer with envelope glycoprotein E2, which mediates virus attachment to the host cell, virion internalization through clathrin-dependent endocytosis and fusion with host membrane. Fusion with the host cell is most likely mediated by both E1 and E2, through conformational rearrangements of the heterodimer required for fusion rather than a classical class II fusion mechanism. E1/E2 heterodimer binds host apolipoproteins such as APOB and APOE thereby forming a lipo-viro-particle (LVP). APOE associated to the LVP allows the initial virus attachment to cell surface receptors such as the heparan sulfate proteoglycans (HSPGs), syndecan-1 (SDC1), syndecan-1 (SDC2), the low-density lipoprotein receptor (LDLR) and scavenger receptor class B type I (SCARB1). The cholesterol transfer activity of SCARB1 allows E2 exposure and binding of E2 to SCARB1 and the tetraspanin CD81. E1/E2 heterodimer binding on CD81 activates the epithelial growth factor receptor (EGFR) signaling pathway. Diffusion of the complex E1-E2-EGFR-SCARB1-CD81 to the cell lateral membrane allows further interaction with Claudin 1 (CLDN1) and occludin (OCLN) to finally trigger HCV entry. Forms a heterodimer with envelope glycoprotein E1, which mediates virus attachment to the host cell, virion internalization through clathrin-dependent endocytosis and fusion with host membrane. Fusion with the host cell is most likely mediated by both E1 and E2, through conformational rearrangements of the heterodimer required for fusion rather than a classical class II fusion mechanism. The interaction between envelope glycoprotein E2 and host apolipoprotein E/APOE allows the proper assembly, maturation and infectivity of the viral particles. This interaction is probably promoted via the up-regulation of cellular autophagy by the virus. E1/E2 heterodimer binds host apolipoproteins such as APOB and APOE thereby forming a lipo-viro-particle (LVP). APOE associated to the LVP allows the initial virus attachment to cell surface receptors such as the heparan sulfate proteoglycans (HSPGs), syndecan-1 (SDC1), syndecan-1 (SDC2), the low-density lipoprotein receptor (LDLR) and scavenger receptor class B type I (SCARB1). The cholesterol transfer activity of SCARB1 allows E2 exposure and binding of E2 to SCARB1 and the tetraspanin CD81. E1/E2 heterodimer binding on CD81 activates the epithelial growth factor receptor (EGFR) signaling pathway. Diffusion of the complex E1-E2-EGFR-SCARB1-CD81 to the cell lateral membrane allows further interaction with Claudin 1 (CLDN1) and occludin (OCLN) to finally trigger HCV entry. Inhibits host EIF2AK2/PKR activation, preventing the establishment of an antiviral state. Viral ligand for CD209/DC-SIGN and CLEC4M/DC-SIGNR, which are respectively found on dendritic cells (DCs), and on liver sinusoidal endothelial cells and macrophage-like cells of lymph node sinuses. These interactions allow the capture of circulating HCV particles by these cells and subsequent facilitated transmission to permissive cells such as hepatocytes and lymphocyte subpopulations. The interaction between E2 and host amino acid transporter complex formed by SLC3A2 and SLC7A5/LAT1 may facilitate viral entry into host cell. Functionally, ion channel protein that acts as a viroporin and plays an essential role in the assembly, envelopment and secretion of viral particles. Regulates the host cell secretory pathway, which induces the intracellular retention of viral glycoproteins and favors assembly of viral particles. Creates a pore in acidic organelles and releases Ca(2+) and H(+) in the cytoplasm of infected cells, leading to a productive viral infection. High levels of cytoplasmic Ca(2+) may trigger membrane trafficking and transport of viral ER-associated proteins to viroplasms, sites of viral genome replication. This ionic imbalance induces the assembly of the inflammasome complex, which triggers the maturation of pro-IL-1beta into IL-1beta through the action of caspase-1. Targets also host mitochondria and induces mitochondrial depolarization. In addition of its role as a viroporin, acts as a lipid raft adhesion factor. Its function is as follows. Cysteine protease required for the proteolytic auto-cleavage between the non-structural proteins NS2 and NS3. The N-terminus of NS3 is required for the function of NS2 protease (active region NS2-3). Promotes the initiation of viral particle assembly by mediating the interaction between structural and non-structural proteins. In terms of biological role, displays three enzymatic activities: serine protease with a chymotrypsin-like fold, NTPase and RNA helicase. NS3 serine protease, in association with NS4A, is responsible for the cleavages of NS3-NS4A, NS4A-NS4B, NS4B-NS5A and NS5A-NS5B. The NS3/NS4A complex prevents phosphorylation of host IRF3, thus preventing the establishment of dsRNA induced antiviral state. The NS3/NS4A complex induces host amino acid transporter component SLC3A2, thus contributing to HCV propagation. NS3 RNA helicase binds to RNA and unwinds both dsDNA and dsRNA in the 3' to 5' direction, and likely resolves RNA complicated stable secondary structures in the template strand. Binds a single ATP and catalyzes the unzipping of a single base pair of dsRNA. Inhibits host antiviral proteins TBK1 and IRF3 thereby preventing the establishment of an antiviral state. Cleaves host MAVS/CARDIF thereby preventing the establishment of an antiviral state. Cleaves host TICAM1/TRIF, thereby disrupting TLR3 signaling and preventing the establishment of an antiviral state. Peptide cofactor which forms a non-covalent complex with the N-terminal of NS3 serine protease. The NS3/NS4A complex prevents phosphorylation of host IRF3, thus preventing the establishment of dsRNA induced antiviral state. The NS3/NS4A complex induces host amino acid transporter component SLC3A2, thus contributing to HCV propagation. Functionally, induces a specific membrane alteration that serves as a scaffold for the virus replication complex. This membrane alteration gives rise to the so-called ER-derived membranous web that contains the replication complex. NS4B self-interaction contributes to its function in membranous web formation. Promotes host TRIF protein degradation in a CASP8-dependent manner thereby inhibiting host TLR3-mediated interferon signaling. Disrupts the interaction between STING and TBK1 contributing to the inhibition of interferon signaling. Its function is as follows. Phosphorylated protein that is indispensable for viral replication and assembly. Both hypo- and hyperphosphorylated states are required for the viral life cycle. The hyperphosphorylated form of NS5A is an inhibitor of viral replication. Involved in RNA-binding and especially in binding to the viral genome. Zinc is essential for RNA-binding. Participates in the viral particle production as a result of its interaction with the viral mature core protein. Its interaction with host VAPB may target the viral replication complex to vesicles. Down-regulates viral IRES translation initiation. Mediates interferon resistance, presumably by interacting with and inhibiting host EIF2AK2/PKR. Prevents BIN1-induced apoptosis. Acts as a transcriptional activator of some host genes important for viral replication when localized in the nucleus. Via the interaction with host PACSIN2, modulates lipid droplet formation in order to promote virion assembly. Modulates TNFRSF21/DR6 signaling pathway for viral propagation. In terms of biological role, RNA-dependent RNA polymerase that performs primer-template recognition and RNA synthesis during viral replication. Initiates RNA transcription/replication at a flavin adenine dinucleotide (FAD), resulting in a 5'- FAD cap on viral RNAs. In this way, recognition of viral 5' RNA by host pattern recognition receptors can be bypassed, thereby evading activation of antiviral pathways. This is Genome polyprotein from Hepatitis C virus genotype 1b (isolate BK) (HCV).